Reading from the N-terminus, the 97-residue chain is RNA-binding protein Hfq (97 aa).

The Sm domain maps to 10–70 (DPFLNALRKE…ISTIVPARSV (61 aa)).

It belongs to the Hfq family. In terms of assembly, homohexamer.

Its function is as follows. RNA chaperone that binds small regulatory RNA (sRNAs) and mRNAs to facilitate mRNA translational regulation in response to envelope stress, environmental stress and changes in metabolite concentrations. Also binds with high specificity to tRNAs. The chain is RNA-binding protein Hfq from Neisseria gonorrhoeae (strain ATCC 700825 / FA 1090).